The sequence spans 124 residues: Apolipoprotein C-IV (124 aa).

The signal sequence occupies residues 1–27 (MSLLRCRPRDLPSVSLSVLFLVSFVAS). Asn-107 carries N-linked (GlcNAc...) asparagine glycosylation.

Belongs to the apolipoprotein C4 family. In terms of tissue distribution, expressed by the liver and secreted in plasma.

It is found in the secreted. Its function is as follows. May participate in lipoprotein metabolism. The protein is Apolipoprotein C-IV (Apoc4) of Mus musculus (Mouse).